A 414-amino-acid chain; its full sequence is Histidine--tRNA ligase (414 aa).

Belongs to the class-II aminoacyl-tRNA synthetase family. Homodimer.

It localises to the cytoplasm. The enzyme catalyses tRNA(His) + L-histidine + ATP = L-histidyl-tRNA(His) + AMP + diphosphate + H(+). This Rickettsia rickettsii (strain Iowa) protein is Histidine--tRNA ligase.